A 175-amino-acid polypeptide reads, in one-letter code: Apoptosis regulator Bcl-2 homolog (175 aa).

A helical membrane pass occupies residues 152-174 (YYVTRYFRVAAFIITSLAVINLF).

As to quaternary structure, interacts with host BAK1 and BAX as well as other BH3-containing proteins including BIM, BID or PUMA.

It localises to the host membrane. Plays a role in the inhibition of host apoptosis. Interacts with host proapoptotic factors BAK1 and BAX to supposedly prevent their activation. In Canarypox virus (CNPV), this protein is Apoptosis regulator Bcl-2 homolog (CNPV058).